The primary structure comprises 588 residues: Aspartate--tRNA ligase (588 aa).

Residue glutamate 177 participates in L-aspartate binding. The tract at residues 201 to 204 (QLFK) is aspartate. Position 223 (arginine 223) interacts with L-aspartate. ATP is bound by residues 223–225 (RDE) and glutamine 232. An L-aspartate-binding site is contributed by histidine 451. An ATP-binding site is contributed by glutamate 485. Arginine 492 contributes to the L-aspartate binding site. 537–540 (GLDR) provides a ligand contact to ATP.

It belongs to the class-II aminoacyl-tRNA synthetase family. Type 1 subfamily. In terms of assembly, homodimer.

Its subcellular location is the cytoplasm. The enzyme catalyses tRNA(Asp) + L-aspartate + ATP = L-aspartyl-tRNA(Asp) + AMP + diphosphate. Catalyzes the attachment of L-aspartate to tRNA(Asp) in a two-step reaction: L-aspartate is first activated by ATP to form Asp-AMP and then transferred to the acceptor end of tRNA(Asp). In Staphylococcus aureus (strain MRSA252), this protein is Aspartate--tRNA ligase.